The chain runs to 138 residues: Small ribosomal subunit protein uS11c (138 aa).

Residues 1-22 are disordered; the sequence is MAKPIPRIGSQRNRRINSRKNA. Over residues 12–22 the composition is skewed to basic residues; sequence RNRRINSRKNA.

This sequence belongs to the universal ribosomal protein uS11 family. In terms of assembly, part of the 30S ribosomal subunit.

It is found in the plastid. Its subcellular location is the chloroplast. The sequence is that of Small ribosomal subunit protein uS11c from Fagopyrum esculentum subsp. ancestrale (Wild buckwheat).